The sequence spans 108 residues: ATP synthase peripheral stalk subunit F6, mitochondrial (108 aa).

The N-terminal 32 residues, 1–32 (MILQRLFRFSSVIRSAVSVHLRRNIGVTAVAF), are a transit peptide targeting the mitochondrion. Residues Lys41 and Lys46 each carry the N6-acetyllysine modification. Ser65 carries the phosphoserine modification. At Lys79 the chain carries N6-acetyllysine. 2 positions are modified to N6-acetyllysine; alternate: Lys94 and Lys99. 2 positions are modified to N6-succinyllysine; alternate: Lys94 and Lys99. Residue Lys105 is modified to N6-acetyllysine.

Belongs to the eukaryotic ATPase subunit F6 family. As to quaternary structure, component of the ATP synthase complex composed at least of ATP5F1A/subunit alpha, ATP5F1B/subunit beta, ATP5MC1/subunit c (homooctomer), MT-ATP6/subunit a, MT-ATP8/subunit 8, ATP5ME/subunit e, ATP5MF/subunit f, ATP5MG/subunit g, ATP5MK/subunit k, ATP5MJ/subunit j, ATP5F1C/subunit gamma, ATP5F1D/subunit delta, ATP5F1E/subunit epsilon, ATP5PF/subunit F6, ATP5PB/subunit b, ATP5PD/subunit d, ATP5PO/subunit OSCP. ATP synthase complex consists of a soluble F(1) head domain (subunits alpha(3) and beta(3)) - the catalytic core - and a membrane F(0) domain - the membrane proton channel (subunits c, a, 8, e, f, g, k and j). These two domains are linked by a central stalk (subunits gamma, delta, and epsilon) rotating inside the F1 region and a stationary peripheral stalk (subunits F6, b, d, and OSCP).

It localises to the mitochondrion. Its subcellular location is the mitochondrion inner membrane. Subunit F6, of the mitochondrial membrane ATP synthase complex (F(1)F(0) ATP synthase or Complex V) that produces ATP from ADP in the presence of a proton gradient across the membrane which is generated by electron transport complexes of the respiratory chain. ATP synthase complex consist of a soluble F(1) head domain - the catalytic core - and a membrane F(1) domain - the membrane proton channel. These two domains are linked by a central stalk rotating inside the F(1) region and a stationary peripheral stalk. During catalysis, ATP synthesis in the catalytic domain of F(1) is coupled via a rotary mechanism of the central stalk subunits to proton translocation. In vivo, can only synthesize ATP although its ATP hydrolase activity can be activated artificially in vitro. Part of the complex F(0) domain. Part of the complex F(0) domain and the peripheric stalk, which acts as a stator to hold the catalytic alpha(3)beta(3) subcomplex and subunit a/ATP6 static relative to the rotary elements. This Homo sapiens (Human) protein is ATP synthase peripheral stalk subunit F6, mitochondrial.